A 71-amino-acid chain; its full sequence is Prophage lysis protein S homolog EssD (71 aa).

The protein belongs to the lambda phage S protein family.

The sequence is that of Prophage lysis protein S homolog EssD (essD) from Escherichia coli (strain K12).